Reading from the N-terminus, the 536-residue chain is Chaperonin GroEL (536 aa).

ATP is bound by residues 29 to 32 (TLGP), 86 to 90 (DGTTT), Gly-412, and Asp-493.

Belongs to the chaperonin (HSP60) family. In terms of assembly, forms a cylinder of 14 subunits composed of two heptameric rings stacked back-to-back. Interacts with the co-chaperonin GroES.

The protein resides in the cytoplasm. The catalysed reaction is ATP + H2O + a folded polypeptide = ADP + phosphate + an unfolded polypeptide.. Functionally, together with its co-chaperonin GroES, plays an essential role in assisting protein folding. The GroEL-GroES system forms a nano-cage that allows encapsulation of the non-native substrate proteins and provides a physical environment optimized to promote and accelerate protein folding. This Onion yellows phytoplasma (strain OY-M) protein is Chaperonin GroEL.